We begin with the raw amino-acid sequence, 635 residues long: MARSVRRTTLALLLSAVLAMTLFVTAPAHAQDSTWTVSGPSARSGPQARLQLDATTGALTLQVSRGGRTVLEPSPLGIRTEGADLSRGLRLSGRERRVVAERYRTAVGKQRSRDVRMTETRFRFRGDGGARFDLVVRVSDDGVAYRYVLPKGSGDVLGETSAFTLPTDATAWLGAYRRDNENLFNQYPAATAPTGEYMAQALFETRGTYALIAESDLSGRYSAARLIHEAGLPTYRIGLWDERVTSDGALSTPWRALVVGDLATVTESTFTDDLAPASRVADTSWIRPGPALWTWLAGGKPAGQSLSMQKGYVDYAAQRGWPYVVVDAGWYFDPDQWDVTDPDWQTNSWIPELVTYARERGVGIQVWIHHRDLDTAEEREQWLPTLERWGVKGVKIDFMDSESQDTLRWYDEILPATAAHHLLVNFHGSTIPKGIQRTWPHVMTMEGVNGEEKRVNTAQHLTTLPFTRNVIGSMDFTPGAFHRPQRPNAASDAGELGLSVLYESGIQNLAGTPESYDARPLARGFLEQLPAAWDRTRLLAGRPGESAVLARASGGRWFIGGTFAGAAHTAEVPLRLGSGTWLVDLVLDGPDGLVREPRVVRGGDTLSVPVVADGGFAAIACHWRPGRTSCDRTAA.

An N-terminal signal peptide occupies residues Met1 to Ala30. Asp179 contributes to the Ca(2+) binding site. Asp397 acts as the Nucleophile in catalysis. Residues Glu446 and Glu452 each coordinate Ca(2+). Glu452 serves as the catalytic Proton donor/acceptor.

It belongs to the glycosyl hydrolase 97 family. The cofactor is Ca(2+).

The catalysed reaction is Hydrolysis of terminal, non-reducing alpha-D-galactose residues in alpha-D-galactosides, including galactose oligosaccharides, galactomannans and galactolipids.. The chain is Probable retaining alpha-galactosidase from Streptomyces bingchenggensis (strain BCW-1).